The chain runs to 283 residues: 4-diphosphocytidyl-2-C-methyl-D-erythritol kinase (283 aa).

K10 is an active-site residue. ATP is bound at residue 99-109 (PMGGGLGGGSS). The active site involves D141.

It belongs to the GHMP kinase family. IspE subfamily. In terms of assembly, homodimer.

It catalyses the reaction 4-CDP-2-C-methyl-D-erythritol + ATP = 4-CDP-2-C-methyl-D-erythritol 2-phosphate + ADP + H(+). It functions in the pathway isoprenoid biosynthesis; isopentenyl diphosphate biosynthesis via DXP pathway; isopentenyl diphosphate from 1-deoxy-D-xylulose 5-phosphate: step 3/6. Catalyzes the phosphorylation of the position 2 hydroxy group of 4-diphosphocytidyl-2C-methyl-D-erythritol. The polypeptide is 4-diphosphocytidyl-2-C-methyl-D-erythritol kinase (Salmonella paratyphi C (strain RKS4594)).